The following is a 216-amino-acid chain: Cobalt-zinc-cadmium resistance protein CzcN (216 aa).

A run of 3 helical transmembrane segments spans residues 27-47 (IGVW…GHSR), 50-70 (GTWV…LATV), and 116-136 (ESLA…PAVI).

To A.xylosoxydans NccN.

It localises to the cell inner membrane. Component of the CZC cation-efflux system that confers resistance to cobalt, zinc and cadmium. The sequence is that of Cobalt-zinc-cadmium resistance protein CzcN (czcN) from Cupriavidus metallidurans (strain ATCC 43123 / DSM 2839 / NBRC 102507 / CH34) (Ralstonia metallidurans).